Reading from the N-terminus, the 1241-residue chain is Putative urea carboxylase (1241 aa).

Residues 3 to 459 (ALKTLLIANR…LTKFLNNFEY (457 aa)) enclose the Biotin carboxylation domain. 2 residues coordinate ATP: K117 and E201. The ATP-grasp domain occupies 121-321 (RELATKAGVP…LVELMLRQAD (201 aa)). One can recognise a Biotinyl-binding domain in the interval 1159-1239 (EELLKDPEIT…EAGKPLMLVR (81 aa)). K1202 carries the N6-biotinyllysine modification.

It depends on biotin as a cofactor.

The catalysed reaction is urea + hydrogencarbonate + ATP = urea-1-carboxylate + ADP + phosphate + H(+). Involved in the utilization of lactams. Required for the conversion of exogenous 2-pyrrolidinone (gamma-butyrolactam) to endogenous gamma-amino-n-butyrate (GABA). The chain is Putative urea carboxylase (lamA) from Emericella nidulans (strain FGSC A4 / ATCC 38163 / CBS 112.46 / NRRL 194 / M139) (Aspergillus nidulans).